A 244-amino-acid chain; its full sequence is NAD(P)H-quinone oxidoreductase subunit K (244 aa).

[4Fe-4S] cluster contacts are provided by cysteine 60, cysteine 61, cysteine 125, and cysteine 156.

This sequence belongs to the complex I 20 kDa subunit family. As to quaternary structure, NDH-1 can be composed of about 15 different subunits; different subcomplexes with different compositions have been identified which probably have different functions. It depends on [4Fe-4S] cluster as a cofactor.

Its subcellular location is the cellular thylakoid membrane. It catalyses the reaction a plastoquinone + NADH + (n+1) H(+)(in) = a plastoquinol + NAD(+) + n H(+)(out). The catalysed reaction is a plastoquinone + NADPH + (n+1) H(+)(in) = a plastoquinol + NADP(+) + n H(+)(out). In terms of biological role, NDH-1 shuttles electrons from an unknown electron donor, via FMN and iron-sulfur (Fe-S) centers, to quinones in the respiratory and/or the photosynthetic chain. The immediate electron acceptor for the enzyme in this species is believed to be plastoquinone. Couples the redox reaction to proton translocation, and thus conserves the redox energy in a proton gradient. Cyanobacterial NDH-1 also plays a role in inorganic carbon-concentration. This chain is NAD(P)H-quinone oxidoreductase subunit K, found in Prochlorococcus marinus (strain MIT 9515).